A 708-amino-acid polypeptide reads, in one-letter code: Polyribonucleotide nucleotidyltransferase (708 aa).

The Mg(2+) site is built by D486 and D492. Residues 553–612 enclose the KH domain; it reads PRIIKFKINPEKIRDVIGKGGAVIRALTEETGTTIDISDDGSVTIACVSSEGGEQARKRI. Residues 622–690 form the S1 motif domain; sequence GRIYEGTVLK…EKGRLRLSMK (69 aa).

Belongs to the polyribonucleotide nucleotidyltransferase family. Requires Mg(2+) as cofactor.

The protein localises to the cytoplasm. The enzyme catalyses RNA(n+1) + phosphate = RNA(n) + a ribonucleoside 5'-diphosphate. In terms of biological role, involved in mRNA degradation. Catalyzes the phosphorolysis of single-stranded polyribonucleotides processively in the 3'- to 5'-direction. This Nitrosomonas europaea (strain ATCC 19718 / CIP 103999 / KCTC 2705 / NBRC 14298) protein is Polyribonucleotide nucleotidyltransferase.